The chain runs to 261 residues: Polyamine aminopropyltransferase (261 aa).

Residues 1–219 enclose the PABS domain; it reads MHPFRRRVRP…AVMAFRQSPS (219 aa). S-methyl-5'-thioadenosine is bound by residues D96 and 124-125; that span reads DG. D142 functions as the Proton acceptor in the catalytic mechanism.

It belongs to the spermidine/spermine synthase family. In terms of assembly, homodimer or homotetramer.

Its subcellular location is the cytoplasm. It catalyses the reaction S-adenosyl 3-(methylsulfanyl)propylamine + putrescine = S-methyl-5'-thioadenosine + spermidine + H(+). It participates in amine and polyamine biosynthesis; spermidine biosynthesis; spermidine from putrescine: step 1/1. Functionally, catalyzes the irreversible transfer of a propylamine group from the amino donor S-adenosylmethioninamine (decarboxy-AdoMet) to putrescine (1,4-diaminobutane) to yield spermidine. The chain is Polyamine aminopropyltransferase from Chromobacterium violaceum (strain ATCC 12472 / DSM 30191 / JCM 1249 / CCUG 213 / NBRC 12614 / NCIMB 9131 / NCTC 9757 / MK).